The chain runs to 398 residues: Enoyl-[acyl-carrier-protein] reductase [NADH] (398 aa).

Residues G48–Y53, F74–E75, D111–A112, and L139–A140 contribute to the NAD(+) site. Y225 is a substrate binding site. Y235 serves as the catalytic Proton donor. NAD(+) contacts are provided by residues K244 and V273 to T275.

The protein belongs to the TER reductase family. Monomer.

It carries out the reaction a 2,3-saturated acyl-[ACP] + NAD(+) = a (2E)-enoyl-[ACP] + NADH + H(+). Its pathway is lipid metabolism; fatty acid biosynthesis. Involved in the final reduction of the elongation cycle of fatty acid synthesis (FAS II). Catalyzes the reduction of a carbon-carbon double bond in an enoyl moiety that is covalently linked to an acyl carrier protein (ACP). In Paraburkholderia xenovorans (strain LB400), this protein is Enoyl-[acyl-carrier-protein] reductase [NADH].